Here is a 340-residue protein sequence, read N- to C-terminus: ATP synthase subunit a (340 aa).

The first 32 residues, 1–32 (MKRVNVIQAKAFLKVIALLVPLLLNANGPAFA), serve as a signal peptide directing secretion. 6 helical membrane-spanning segments follow: residues 107-127 (HVVMLWVVSAILLILFSLVGS), 172-192 (LLTVFFFVLLCNLLGLVPYGA), 197-217 (NINVTLTLATFTFFITQVAAL), 236-256 (ALWIIMIPIEFIGLFTKPVAL), 269-289 (IVILSLIFISFILQSYIVAVV), and 296-316 (IFIYLLELFVAFLQAFIFTML).

It belongs to the ATPase A chain family. F-type ATPases have 2 components, CF(1) - the catalytic core - and CF(0) - the membrane proton channel. CF(1) has five subunits: alpha(3), beta(3), gamma(1), delta(1), epsilon(1). CF(0) has four main subunits: a, b, b' and c.

It is found in the cell inner membrane. Functionally, key component of the proton channel; it plays a direct role in the translocation of protons across the membrane. This chain is ATP synthase subunit a, found in Pelodictyon phaeoclathratiforme (strain DSM 5477 / BU-1).